A 726-amino-acid polypeptide reads, in one-letter code: Sister chromatid cohesion protein SCC4 (726 aa).

TPR repeat units lie at residues alanine 7 to phenylalanine 40, phenylalanine 88 to valine 121, cysteine 132 to isoleucine 165, arginine 229 to leucine 262, proline 443 to alanine 477, alanine 531 to histidine 564, and alanine 572 to leucine 605. A disordered region spans residues serine 697 to methionine 726.

This sequence belongs to the SCC4/mau-2 family. As to quaternary structure, interacts with SCC2 to form the cohesin loading complex. Expressed ubiquitously.

The protein localises to the nucleus. The protein resides in the cytoplasm. Functionally, essential protein required for cell fate determination during embryogenesis. Involved in sister chromatid cohesion. Forms a complex with SCC2, which is required for the association of the cohesin complex with chromosomes. In Arabidopsis thaliana (Mouse-ear cress), this protein is Sister chromatid cohesion protein SCC4.